Reading from the N-terminus, the 343-residue chain is Peptide methionine sulfoxide reductase msrA/msrB (343 aa).

Residues 21–174 are peptide methionine sulfoxide reductase A; sequence KVIYLAGGCF…PNGYCHIDLK (154 aa). Cys-29 serves as the catalytic Cysteine sulfenic acid (-SOH) intermediate. A MsrB domain is found at 191–314; the sequence is DEVLKKKLTQ…NSASLRFIPL (124 aa). Catalysis depends on Cys-303, which acts as the Nucleophile.

In the N-terminal section; belongs to the MsrA Met sulfoxide reductase family. This sequence in the C-terminal section; belongs to the MsrB Met sulfoxide reductase family.

It carries out the reaction L-methionyl-[protein] + [thioredoxin]-disulfide + H2O = L-methionyl-(S)-S-oxide-[protein] + [thioredoxin]-dithiol. The enzyme catalyses [thioredoxin]-disulfide + L-methionine + H2O = L-methionine (S)-S-oxide + [thioredoxin]-dithiol. It catalyses the reaction L-methionyl-[protein] + [thioredoxin]-disulfide + H2O = L-methionyl-(R)-S-oxide-[protein] + [thioredoxin]-dithiol. Has an important function as a repair enzyme for proteins that have been inactivated by oxidation. Catalyzes the reversible oxidation-reduction of methionine sulfoxide in proteins to methionine. This is Peptide methionine sulfoxide reductase msrA/msrB from Enterococcus faecalis (Streptococcus faecalis).